The chain runs to 385 residues: MYSKELGINFFGNESNKKNQLNKIEILKKNINNFKIFLVIAGTNTSQISGISAAGINAKSRRKTALADAEFLLKGASKDHKYKLPLLNAGVTPALISHVCAKLINIHPVIVPLGLGVKPYFNHLVVEDRDLGPSNCLTTGKSMSKKRVINLYEKGLAIGKSSKQPILISESVPGGTTTAQAVMEAFGLRVANLVGSSLFKAPRELRKKVVQKGLLNANLKTDFDSFDVVAAVGDPFQAFSMGLLIGARLAKQSVILSGGSQMLAIILLVLEFLDLKNEDDFIEDVFIATTGWLVKDNSLSDLLDIINEKYDVKLLGLASPLNFKFSKYKELKDYELGHVKEGVGAGGISLLAFLDGFKNEEIVSLCQQNLEMMKVLGQISLEKDC.

It belongs to the UPF0284 family.

The chain is UPF0284 protein P9215_05181 from Prochlorococcus marinus (strain MIT 9215).